The following is a 957-amino-acid chain: Glycine dehydrogenase (decarboxylating) (957 aa).

Lysine 708 carries the N6-(pyridoxal phosphate)lysine modification.

This sequence belongs to the GcvP family. As to quaternary structure, the glycine cleavage system is composed of four proteins: P, T, L and H. It depends on pyridoxal 5'-phosphate as a cofactor.

The enzyme catalyses N(6)-[(R)-lipoyl]-L-lysyl-[glycine-cleavage complex H protein] + glycine + H(+) = N(6)-[(R)-S(8)-aminomethyldihydrolipoyl]-L-lysyl-[glycine-cleavage complex H protein] + CO2. In terms of biological role, the glycine cleavage system catalyzes the degradation of glycine. The P protein binds the alpha-amino group of glycine through its pyridoxal phosphate cofactor; CO(2) is released and the remaining methylamine moiety is then transferred to the lipoamide cofactor of the H protein. The chain is Glycine dehydrogenase (decarboxylating) from Shigella dysenteriae serotype 1 (strain Sd197).